The sequence spans 115 residues: Large ribosomal subunit protein bL35m (115 aa).

This sequence belongs to the bacterial ribosomal protein bL35 family.

It localises to the mitochondrion. The polypeptide is Large ribosomal subunit protein bL35m (Saccharomyces cerevisiae (strain YJM789) (Baker's yeast)).